Here is a 106-residue protein sequence, read N- to C-terminus: Ferredoxin (106 aa).

2 residues coordinate [3Fe-4S] cluster: C8 and C16. [4Fe-4S] cluster contacts are provided by C20, C39, C42, and C45. One can recognise a 4Fe-4S ferredoxin-type domain in the interval 30 to 59 (RMLYIHPDECVDCGACEPVCPVEAIYYEDD). C49 is a [3Fe-4S] cluster binding site. The disordered stretch occupies residues 81 to 106 (PGGASKVGQTDNDPQAIKDLPPQGED).

The cofactor is [4Fe-4S] cluster. It depends on [3Fe-4S] cluster as a cofactor.

Its function is as follows. Ferredoxins are iron-sulfur proteins that transfer electrons in a wide variety of metabolic reactions. The sequence is that of Ferredoxin (fdxA) from Mycolicibacterium smegmatis (Mycobacterium smegmatis).